Here is a 78-residue protein sequence, read N- to C-terminus: Ubiquitin-like protein 1 (78 aa).

Belongs to the ubiquitin family.

The chain is Ubiquitin-like protein 1 (ubl1) from Schizosaccharomyces pombe (strain 972 / ATCC 24843) (Fission yeast).